We begin with the raw amino-acid sequence, 129 residues long: Protein BUNDLE SHEATH DEFECTIVE 2, chloroplastic (129 aa).

A chloroplast-targeting transit peptide spans 1–43 (MAATASLTTTAPSPPALLKASAPLLISFRPVSRHCKNLCIKTK). The CR-type zinc-finger motif lies at 49-123 (QSAKKHQKVK…AGFLGGFLST (75 aa)). Residues Cys62, Cys65, Asn68, Cys73, Cys76, Cys97, Cys100, Glu105, Cys108, and Cys111 each coordinate Zn(2+).

This sequence belongs to the BSD2 chaperone family. As to quaternary structure, interacts with the RuBisCo large subunit (RbcL) assembled as an intermediate complex made of eight RbcL and eight BSD2 subunits. Expressed in shoot tissues, in both bundle sheath and mesophyll cells.

The protein localises to the plastid. Its subcellular location is the chloroplast stroma. In terms of biological role, chloroplast chaperone required for RuBisCo complex biogenesis and translational regulation of the RuBisCo large subunit (RbcL). Stabilizes an end-state assembly intermediate of eight RbcL subunits until the small subunits (RBCSs) become available to produce a complete stable RuBisCo complex containing eight small and eight large subunits. Involved in the differentiation of bundle sheath cells, especially chloroplast structure. This is Protein BUNDLE SHEATH DEFECTIVE 2, chloroplastic from Zea mays (Maize).